We begin with the raw amino-acid sequence, 235 residues long: 2-C-methyl-D-erythritol 4-phosphate cytidylyltransferase (235 aa).

Belongs to the IspD/TarI cytidylyltransferase family. IspD subfamily. Homodimer.

The catalysed reaction is 2-C-methyl-D-erythritol 4-phosphate + CTP + H(+) = 4-CDP-2-C-methyl-D-erythritol + diphosphate. Its pathway is isoprenoid biosynthesis; isopentenyl diphosphate biosynthesis via DXP pathway; isopentenyl diphosphate from 1-deoxy-D-xylulose 5-phosphate: step 2/6. Its function is as follows. Catalyzes the formation of 4-diphosphocytidyl-2-C-methyl-D-erythritol from CTP and 2-C-methyl-D-erythritol 4-phosphate (MEP). The chain is 2-C-methyl-D-erythritol 4-phosphate cytidylyltransferase from Serratia proteamaculans (strain 568).